The following is a 216-amino-acid chain: Flagellin B2 (216 aa).

Positions 1–12 (MKIKEFMSNKKG) are excised as a propeptide. N-linked (GlcNAc...) asparagine glycans are attached at residues N38, N72, N77, N113, N172, and N208.

It belongs to the archaeal flagellin family. N-linked glycans consist of the 779 Da trisaccharide beta-ManNAc(Thr)-(1-4)-beta-GlcNAc3NAcA-(1-3)-beta-GlcNAc.

Its subcellular location is the archaeal flagellum. In terms of biological role, flagellin is the subunit protein which polymerizes to form the filaments of archaeal flagella. The chain is Flagellin B2 (flaB2) from Methanococcus voltae.